The chain runs to 209 residues: Uridine kinase (209 aa).

12–19 (GGSGSGKT) lines the ATP pocket.

This sequence belongs to the uridine kinase family.

It is found in the cytoplasm. The enzyme catalyses uridine + ATP = UMP + ADP + H(+). It carries out the reaction cytidine + ATP = CMP + ADP + H(+). Its pathway is pyrimidine metabolism; CTP biosynthesis via salvage pathway; CTP from cytidine: step 1/3. It functions in the pathway pyrimidine metabolism; UMP biosynthesis via salvage pathway; UMP from uridine: step 1/1. The polypeptide is Uridine kinase (Streptococcus mutans serotype c (strain ATCC 700610 / UA159)).